Reading from the N-terminus, the 357-residue chain is RNA-binding protein 43 (357 aa).

An RRM domain is found at R15–D104.

This is RNA-binding protein 43 (RBM43) from Homo sapiens (Human).